We begin with the raw amino-acid sequence, 452 residues long: UDP-N-acetylmuramate--L-alanine ligase (452 aa).

Residue G121–T127 coordinates ATP.

It belongs to the MurCDEF family.

The protein localises to the cytoplasm. It carries out the reaction UDP-N-acetyl-alpha-D-muramate + L-alanine + ATP = UDP-N-acetyl-alpha-D-muramoyl-L-alanine + ADP + phosphate + H(+). Its pathway is cell wall biogenesis; peptidoglycan biosynthesis. In terms of biological role, cell wall formation. The chain is UDP-N-acetylmuramate--L-alanine ligase from Christiangramia forsetii (strain DSM 17595 / CGMCC 1.15422 / KT0803) (Gramella forsetii).